Reading from the N-terminus, the 363-residue chain is Spermidine/putrescine import ATP-binding protein PotA (363 aa).

The ABC transporter domain maps to Leu4–Ile234. Gly36–Thr43 provides a ligand contact to ATP.

The protein belongs to the ABC transporter superfamily. Spermidine/putrescine importer (TC 3.A.1.11.1) family. The complex is composed of two ATP-binding proteins (PotA), two transmembrane proteins (PotB and PotC) and a solute-binding protein (PotD).

Its subcellular location is the cell inner membrane. The enzyme catalyses ATP + H2O + polyamine-[polyamine-binding protein]Side 1 = ADP + phosphate + polyamineSide 2 + [polyamine-binding protein]Side 1.. In terms of biological role, part of the ABC transporter complex PotABCD involved in spermidine/putrescine import. Responsible for energy coupling to the transport system. The polypeptide is Spermidine/putrescine import ATP-binding protein PotA (Nitrosomonas eutropha (strain DSM 101675 / C91 / Nm57)).